We begin with the raw amino-acid sequence, 388 residues long: Mannitol-1-phosphate 5-dehydrogenase (388 aa).

Residue 5–16 coordinates NAD(+); sequence AIQFGGGNIGRG. Lys-213 is an active-site residue.

This sequence belongs to the mannitol dehydrogenase family. As to quaternary structure, monomer.

It catalyses the reaction D-mannitol 1-phosphate + NAD(+) = beta-D-fructose 6-phosphate + NADH + H(+). Its function is as follows. Catalyzes the NAD(H)-dependent interconversion of D-fructose 6-phosphate and D-mannitol 1-phosphate in the mannitol metabolic pathway. The polypeptide is Mannitol-1-phosphate 5-dehydrogenase (mpdA) (Neosartorya fischeri (strain ATCC 1020 / DSM 3700 / CBS 544.65 / FGSC A1164 / JCM 1740 / NRRL 181 / WB 181) (Aspergillus fischerianus)).